Reading from the N-terminus, the 338-residue chain is NADPH dehydrogenase (338 aa).

22–25 serves as a coordination point for FMN; that stretch reads SPMC. A substrate-binding site is contributed by Y27. Residues A59 and Q101 each coordinate FMN. Residue 163–166 coordinates substrate; that stretch reads HAAH. FMN-binding positions include R214 and 306–307; that span reads GR.

This sequence belongs to the NADH:flavin oxidoreductase/NADH oxidase family. NamA subfamily. As to quaternary structure, homotetramer. FMN is required as a cofactor.

It catalyses the reaction A + NADPH + H(+) = AH2 + NADP(+). Catalyzes the reduction of the double bond of an array of alpha,beta-unsaturated aldehydes and ketones. It also reduces the nitro group of nitroester and nitroaromatic compounds. It could have a role in detoxification processes. The polypeptide is NADPH dehydrogenase (Listeria welshimeri serovar 6b (strain ATCC 35897 / DSM 20650 / CCUG 15529 / CIP 8149 / NCTC 11857 / SLCC 5334 / V8)).